Consider the following 236-residue polypeptide: Large ribosomal subunit protein eL6 (236 aa).

This sequence belongs to the eukaryotic ribosomal protein eL6 family.

This chain is Large ribosomal subunit protein eL6 (rpl6), found in Dictyostelium discoideum (Social amoeba).